Consider the following 400-residue polypeptide: Enoyl-[acyl-carrier-protein] reductase [NADH] (400 aa).

NAD(+) contacts are provided by residues 48 to 53 (GSSSGY), 74 to 75 (FE), 111 to 112 (DA), and 139 to 140 (LA). Tyr-225 contacts substrate. Tyr-235 functions as the Proton donor in the catalytic mechanism. NAD(+) is bound by residues Lys-244 and 273-275 (VVT).

It belongs to the TER reductase family. Monomer.

The enzyme catalyses a 2,3-saturated acyl-[ACP] + NAD(+) = a (2E)-enoyl-[ACP] + NADH + H(+). The protein operates within lipid metabolism; fatty acid biosynthesis. Involved in the final reduction of the elongation cycle of fatty acid synthesis (FAS II). Catalyzes the reduction of a carbon-carbon double bond in an enoyl moiety that is covalently linked to an acyl carrier protein (ACP). In Shewanella denitrificans (strain OS217 / ATCC BAA-1090 / DSM 15013), this protein is Enoyl-[acyl-carrier-protein] reductase [NADH].